A 208-amino-acid chain; its full sequence is Apoptosis inhibitor 193R (208 aa).

Positions 1–25 (MDTCGIYNSDNEEFSQENDGENDGG) are disordered. The segment covering 10 to 23 (DNEEFSQENDGEND) has biased composition (acidic residues). A BIR repeat occupies 37-108 (YDERLNSFQN…QDLKINCLFV (72 aa)). Zn(2+)-binding residues include cysteine 74, cysteine 77, histidine 94, and cysteine 105. Repeat copies occupy residues 134-139 (NQDLDH), 140-145 (NQDLDH), and 146-151 (NQDLDQ). The segment at 134–151 (NQDLDHNQDLDHNQDLDQ) is 3 X 6 AA tandem repeats. An RING-type zinc finger spans residues 163–197 (CKICFTNKITKVLIPCGHSSCYECVFKLQTCPICK).

It belongs to the IIV-6 193R family.

Functionally, plays a role early in infection by preventing host cell apoptosis. The chain is Apoptosis inhibitor 193R from Invertebrate iridescent virus 6 (IIV-6).